A 319-amino-acid chain; its full sequence is 1-aminocyclopropane-1-carboxylate oxidase 4 (319 aa).

In terms of domain architecture, Fe2OG dioxygenase spans 153 to 253 (PNFGTKVSNY…RMSLASFYNP (101 aa)). Fe cation-binding residues include H177, D179, and H234.

Belongs to the iron/ascorbate-dependent oxidoreductase family. Fe cation serves as cofactor.

The catalysed reaction is 1-aminocyclopropane-1-carboxylate + L-ascorbate + O2 = ethene + L-dehydroascorbate + hydrogen cyanide + CO2 + 2 H2O. It participates in alkene biosynthesis; ethylene biosynthesis via S-adenosyl-L-methionine; ethylene from S-adenosyl-L-methionine: step 2/2. The sequence is that of 1-aminocyclopropane-1-carboxylate oxidase 4 (ACO4) from Petunia hybrida (Petunia).